Consider the following 1404-residue polypeptide: DNA-directed RNA polymerase subunit beta' (1404 aa).

4 residues coordinate Zn(2+): C70, C72, C85, and C88. Mg(2+) is bound by residues D460, D462, and D464. Residues C814, C888, C895, and C898 each coordinate Zn(2+).

The protein belongs to the RNA polymerase beta' chain family. As to quaternary structure, the RNAP catalytic core consists of 2 alpha, 1 beta, 1 beta' and 1 omega subunit. When a sigma factor is associated with the core the holoenzyme is formed, which can initiate transcription. Mg(2+) serves as cofactor. It depends on Zn(2+) as a cofactor.

It catalyses the reaction RNA(n) + a ribonucleoside 5'-triphosphate = RNA(n+1) + diphosphate. DNA-dependent RNA polymerase catalyzes the transcription of DNA into RNA using the four ribonucleoside triphosphates as substrates. The protein is DNA-directed RNA polymerase subunit beta' of Shewanella piezotolerans (strain WP3 / JCM 13877).